Reading from the N-terminus, the 183-residue chain is Ribulose bisphosphate carboxylase small subunit, chloroplastic 1 (183 aa).

The transit peptide at 1–58 directs the protein to the chloroplast; the sequence is MASSMLSNAAMATTAATAGAQASMVAPFNGLKSFATFPITKKSSNDFSSLPSNGGRVQ.

It belongs to the RuBisCO small chain family. As to quaternary structure, heterohexadecamer of 8 large and 8 small subunits.

It is found in the plastid. Its subcellular location is the chloroplast. Its function is as follows. RuBisCO catalyzes two reactions: the carboxylation of D-ribulose 1,5-bisphosphate, the primary event in carbon dioxide fixation, as well as the oxidative fragmentation of the pentose substrate. Both reactions occur simultaneously and in competition at the same active site. Although the small subunit is not catalytic it is essential for maximal activity. In Amaranthus hypochondriacus (Prince-of-Wales feather), this protein is Ribulose bisphosphate carboxylase small subunit, chloroplastic 1.